A 114-amino-acid chain; its full sequence is Lymphotactin (114 aa).

Positions 1 to 21 (MRLLLLTFLGVCCLTPWVVEG) are cleaved as a signal peptide. Cysteines 32 and 69 form a disulfide. Residues 92–114 (KNMAETVPTGAQRSTSTAITLTG) are disordered. Over residues 100-114 (TGAQRSTSTAITLTG) the composition is skewed to polar residues.

Belongs to the intercrine gamma family. As to expression, expressed in activated CD8(+) T cells. In the thymus, expressed by medullary thymic epithelial cells.

Its subcellular location is the secreted. Its function is as follows. Chemotactic activity for lymphocytes but not for monocytes or neutrophils. In thymus, mediates medullary accumulation of thymic dendritic cells and contributes to regulatoy T cell development, playing a role in self-tolerance establishment. This is Lymphotactin (Xcl1) from Mus musculus (Mouse).